A 290-amino-acid polypeptide reads, in one-letter code: Xylanase inhibitor protein 2 (290 aa).

A signal peptide spans M1 to A27. In terms of domain architecture, GH18 spans P30 to G290. An intrachain disulfide couples C49 to C89. N112 is a glycosylation site (N-linked (GlcNAc...) asparagine). Cysteines 187 and 216 form a disulfide. The N-linked (GlcNAc...) asparagine glycan is linked to N285.

This sequence belongs to the glycosyl hydrolase 18 family. Xylanase inhibitor subfamily. Binds to fungal GH10 xylanases.

Its subcellular location is the secreted. Fungal xylanase inhibitor. Possesses competitive inhibiting activity against several fungal endo-1,4-beta-D-xylanases belonging to glycoside hydrolase family 10 (GH10) and family 11 (GH11). May function in plant defense against secreted fungal pathogen xylanases. Is similar to class III chitinases, but does not exhibit chitinase activity. The protein is Xylanase inhibitor protein 2 of Oryza sativa subsp. japonica (Rice).